The sequence spans 541 residues: Peptidyl-prolyl isomerase cwc-27 (541 aa).

The PPIase cyclophilin-type domain occupies 11-193 (PTASAIIHTT…YPIKITRIEI (183 aa)). Disordered stretches follow at residues 199–443 (DDMQ…GQAD) and 513–541 (TLKE…RDRH). Composition is skewed to basic and acidic residues over residues 279 to 307 (AKRD…ESRR), 316 to 348 (QKKE…KTNE), and 361 to 374 (IHSE…KKSA). The segment covering 432-442 (DVEDGEQDGQA) has biased composition (acidic residues). Basic and acidic residues-rich tracts occupy residues 513-525 (TLKE…RDAK) and 532-541 (AWDRGRRDRH).

Belongs to the cyclophilin-type PPIase family. CWC27 subfamily. As to quaternary structure, associated with the spliceosome.

Its subcellular location is the cytoplasm. The protein localises to the nucleus. It catalyses the reaction [protein]-peptidylproline (omega=180) = [protein]-peptidylproline (omega=0). Its function is as follows. PPIases accelerate the folding of proteins. It catalyzes the cis-trans isomerization of proline imidic peptide bonds in oligopeptides. Involved in pre-mRNA splicing. The polypeptide is Peptidyl-prolyl isomerase cwc-27 (cwc-27) (Neurospora crassa (strain ATCC 24698 / 74-OR23-1A / CBS 708.71 / DSM 1257 / FGSC 987)).